The sequence spans 131 residues: MSMSDPIADMLTRIRNAQQVDKVTVSMPSSKLKAAIAAVLQDEGYIDGFEVKGTQAKPELEITLKYYAGRPVIERIERVSRPGLRIYKGRSNIPQVMNGLGVAIVSTSRGVMTDRKARANGVGGEVLCYVA.

It belongs to the universal ribosomal protein uS8 family. As to quaternary structure, part of the 30S ribosomal subunit. Contacts proteins S5 and S12.

Functionally, one of the primary rRNA binding proteins, it binds directly to 16S rRNA central domain where it helps coordinate assembly of the platform of the 30S subunit. This is Small ribosomal subunit protein uS8 from Bordetella petrii (strain ATCC BAA-461 / DSM 12804 / CCUG 43448).